The following is a 203-amino-acid chain: Outer-membrane lipoprotein carrier protein (203 aa).

Residues 1-21 (MKKLIISCCLLATFSAAGAWA) form the signal peptide. The interval 174–203 (ALKSQQSGPISADKFKFRPPKGVTVDDQRQ) is disordered.

It belongs to the LolA family. As to quaternary structure, monomer.

The protein localises to the periplasm. In terms of biological role, participates in the translocation of lipoproteins from the inner membrane to the outer membrane. Only forms a complex with a lipoprotein if the residue after the N-terminal Cys is not an aspartate (The Asp acts as a targeting signal to indicate that the lipoprotein should stay in the inner membrane). This is Outer-membrane lipoprotein carrier protein from Erwinia tasmaniensis (strain DSM 17950 / CFBP 7177 / CIP 109463 / NCPPB 4357 / Et1/99).